A 233-amino-acid chain; its full sequence is uncharacterized protein (233 aa).

Residues 21–41 (LNILIAIVSILIVVVAANLFI) traverse the membrane as a helical segment. The disordered stretch occupies residues 44 to 163 (PSSKDVSKDS…GEHAATYDSS (120 aa)). 3 stretches are compositionally biased toward basic and acidic residues: residues 48–57 (DVSKDSETAQ), 66–108 (KTEK…KKDD), and 135–144 (DVEKTYENPD).

Its subcellular location is the cell membrane. This is an uncharacterized protein from Bacillus subtilis (strain 168).